A 197-amino-acid polypeptide reads, in one-letter code: MSRVGRVERTTKETSVLVEIDLDGSGKVDVSTGVGFYDHMLDQLGRHGLFDLTVKTEGDLHIDSHHTIEDTALALGAAFKQALGDKVGIYRFGNCTVPLDESLAQVTVDLSGRPYLVHTEPENMAPMIGEYDTTMTRHILESFVAQAQIALHVHVPYGRNAHHIVECQFKALARALRYASERDPRAAGILPSTKGAL.

It belongs to the imidazoleglycerol-phosphate dehydratase family.

It is found in the cytoplasm. The catalysed reaction is D-erythro-1-(imidazol-4-yl)glycerol 3-phosphate = 3-(imidazol-4-yl)-2-oxopropyl phosphate + H2O. It functions in the pathway amino-acid biosynthesis; L-histidine biosynthesis; L-histidine from 5-phospho-alpha-D-ribose 1-diphosphate: step 6/9. The sequence is that of Imidazoleglycerol-phosphate dehydratase from Streptomyces avermitilis (strain ATCC 31267 / DSM 46492 / JCM 5070 / NBRC 14893 / NCIMB 12804 / NRRL 8165 / MA-4680).